The primary structure comprises 150 residues: uncharacterized protein (150 aa).

This sequence belongs to the aspartate/glutamate racemases family.

This is an uncharacterized protein from Pectobacterium carotovorum subsp. carotovorum (Erwinia carotovora subsp. carotovora).